The chain runs to 268 residues: Casein kinase II subunit beta (268 aa).

The interval 222–268 (LSNNNQNNQNNNINNNNNNNNNNNNNNNNNNNNQQNNNNQQNNNTNK) is disordered. Over residues 224-268 (NNNQNNQNNNINNNNNNNNNNNNNNNNNNNNQQNNNNQQNNNTNK) the composition is skewed to low complexity.

This sequence belongs to the casein kinase 2 subunit beta family. In terms of assembly, casein kinase II/CK2 is a tetramer composed of two alpha subunit and two beta subunits.

Its function is as follows. Regulatory subunit of casein kinase II/CK2. As part of the kinase complex regulates the basal catalytic activity of the alpha subunit a constitutively active serine/threonine-protein kinase that phosphorylates a large number of substrates containing acidic residues C-terminal to the phosphorylated serine or threonine. The chain is Casein kinase II subunit beta (csnk2b) from Dictyostelium discoideum (Social amoeba).